Reading from the N-terminus, the 153-residue chain is uncharacterized protein (153 aa).

This is an uncharacterized protein from Bacillus subtilis (strain 168).